The following is a 506-amino-acid chain: Maturase K (506 aa).

The protein belongs to the intron maturase 2 family. MatK subfamily.

The protein resides in the plastid. Its subcellular location is the chloroplast. In terms of biological role, usually encoded in the trnK tRNA gene intron. Probably assists in splicing its own and other chloroplast group II introns. This Medicago truncatula (Barrel medic) protein is Maturase K.